A 603-amino-acid chain; its full sequence is Elongation factor 4 (603 aa).

One can recognise a tr-type G domain in the interval 5–187 (RHIRNFCIIA…AVVNFVPPPK (183 aa)). GTP-binding positions include 17 to 22 (DHGKST) and 134 to 137 (NKID).

This sequence belongs to the TRAFAC class translation factor GTPase superfamily. Classic translation factor GTPase family. LepA subfamily.

The protein resides in the cell membrane. The catalysed reaction is GTP + H2O = GDP + phosphate + H(+). Its function is as follows. Required for accurate and efficient protein synthesis under certain stress conditions. May act as a fidelity factor of the translation reaction, by catalyzing a one-codon backward translocation of tRNAs on improperly translocated ribosomes. Back-translocation proceeds from a post-translocation (POST) complex to a pre-translocation (PRE) complex, thus giving elongation factor G a second chance to translocate the tRNAs correctly. Binds to ribosomes in a GTP-dependent manner. The protein is Elongation factor 4 of Symbiobacterium thermophilum (strain DSM 24528 / JCM 14929 / IAM 14863 / T).